The following is a 1071-amino-acid chain: Carbamoyl phosphate synthase large chain (1071 aa).

Residues 1–403 (MPKRTDLKSI…SFQKALRGLE (403 aa)) are carboxyphosphate synthetic domain. The region spanning 133–328 (KEAMEKIGLS…IAKVAANWAV (196 aa)) is the ATP-grasp 1 domain. The ATP site is built by R169, G175, G176, Q208, V210, E215, G241, V242, H243, Q285, and E299. Mg(2+)-binding residues include Q285, E299, and N301. Mn(2+) is bound by residues Q285, E299, and N301. An oligomerization domain region spans residues 404–548 (TGLCGFNPAR…YSTYEEECES (145 aa)). The interval 549–930 (RPSDRKKVMI…AYYKAQLGAG (382 aa)) is carbamoyl phosphate synthetic domain. The 192-residue stretch at 673-864 (QKVLNDLGLR…LAKVGARCMA (192 aa)) folds into the ATP-grasp 2 domain. 10 residues coordinate ATP: R709, F748, L750, E755, G780, I781, H782, S783, Q823, and E835. 3 residues coordinate Mg(2+): Q823, E835, and N837. Positions 823, 835, and 837 each coordinate Mn(2+). The 141-residue stretch at 931-1071 (ERLNPTGKIF…ELHGRLKNRN (141 aa)) folds into the MGS-like domain. Positions 931–1071 (ERLNPTGKIF…ELHGRLKNRN (141 aa)) are allosteric domain.

Belongs to the CarB family. In terms of assembly, composed of two chains; the small (or glutamine) chain promotes the hydrolysis of glutamine to ammonia, which is used by the large (or ammonia) chain to synthesize carbamoyl phosphate. Tetramer of heterodimers (alpha,beta)4. The cofactor is Mg(2+). Mn(2+) is required as a cofactor.

The catalysed reaction is hydrogencarbonate + L-glutamine + 2 ATP + H2O = carbamoyl phosphate + L-glutamate + 2 ADP + phosphate + 2 H(+). It catalyses the reaction hydrogencarbonate + NH4(+) + 2 ATP = carbamoyl phosphate + 2 ADP + phosphate + 2 H(+). It participates in amino-acid biosynthesis; L-arginine biosynthesis; carbamoyl phosphate from bicarbonate: step 1/1. It functions in the pathway pyrimidine metabolism; UMP biosynthesis via de novo pathway; (S)-dihydroorotate from bicarbonate: step 1/3. Large subunit of the glutamine-dependent carbamoyl phosphate synthetase (CPSase). CPSase catalyzes the formation of carbamoyl phosphate from the ammonia moiety of glutamine, carbonate, and phosphate donated by ATP, constituting the first step of 2 biosynthetic pathways, one leading to arginine and/or urea and the other to pyrimidine nucleotides. The large subunit (synthetase) binds the substrates ammonia (free or transferred from glutamine from the small subunit), hydrogencarbonate and ATP and carries out an ATP-coupled ligase reaction, activating hydrogencarbonate by forming carboxy phosphate which reacts with ammonia to form carbamoyl phosphate. The protein is Carbamoyl phosphate synthase large chain of Neisseria gonorrhoeae.